A 386-amino-acid chain; its full sequence is tRNA-specific adenosine deaminase subunit tad2 (386 aa).

The region spanning 212–322 is the CMP/dCMP-type deaminase domain; the sequence is TQHETYMKLA…GNDRFGGCGS (111 aa). A Zn(2+)-binding site is contributed by His263. Glu265 serves as the catalytic Proton donor. Positions 293 and 296 each coordinate Zn(2+).

Belongs to the cytidine and deoxycytidylate deaminase family. ADAT2 subfamily. Heterodimer with Tad3. It depends on Zn(2+) as a cofactor.

The catalysed reaction is adenosine(34) in tRNA + H2O + H(+) = inosine(34) in tRNA + NH4(+). Its function is as follows. Structural subunit of tRNA-specific adenosine deaminase, which deaminates adenosine-34 (the first, also called wobble position of the anticodon) to inosine in many tRNAs. Inosine-34 allows the decoding of 3 different nucleotides at the third position of mRNA codons, as inosine is able to pair with U, C, and A. The wobble inosine tRNA modification is essential for cell cycle progression in the G1/S and G2/M transitions in fission yeast. This chain is tRNA-specific adenosine deaminase subunit tad2 (tad2), found in Schizosaccharomyces pombe (strain 972 / ATCC 24843) (Fission yeast).